The primary structure comprises 227 residues: Uracil-DNA glycosylase (227 aa).

The active-site Proton acceptor is the D65.

It belongs to the uracil-DNA glycosylase (UDG) superfamily. UNG family.

It is found in the cytoplasm. The enzyme catalyses Hydrolyzes single-stranded DNA or mismatched double-stranded DNA and polynucleotides, releasing free uracil.. In terms of biological role, excises uracil residues from the DNA which can arise as a result of misincorporation of dUMP residues by DNA polymerase or due to deamination of cytosine. In Lactobacillus delbrueckii subsp. bulgaricus (strain ATCC BAA-365 / Lb-18), this protein is Uracil-DNA glycosylase.